We begin with the raw amino-acid sequence, 475 residues long: Ribulose bisphosphate carboxylase large chain (475 aa).

Residues 1-2 constitute a propeptide that is removed on maturation; sequence MS. Pro-3 bears the N-acetylproline mark. The residue at position 14 (Lys-14) is an N6,N6,N6-trimethyllysine. The substrate site is built by Asn-123 and Thr-173. Lys-175 functions as the Proton acceptor in the catalytic mechanism. Lys-177 provides a ligand contact to substrate. Positions 201, 203, and 204 each coordinate Mg(2+). Residue Lys-201 is modified to N6-carboxylysine. His-294 serves as the catalytic Proton acceptor. Arg-295, His-327, and Ser-379 together coordinate substrate.

The protein belongs to the RuBisCO large chain family. Type I subfamily. Heterohexadecamer of 8 large chains and 8 small chains; disulfide-linked. The disulfide link is formed within the large subunit homodimers. It depends on Mg(2+) as a cofactor. Post-translationally, the disulfide bond which can form in the large chain dimeric partners within the hexadecamer appears to be associated with oxidative stress and protein turnover.

It localises to the plastid. Its subcellular location is the chloroplast. The enzyme catalyses 2 (2R)-3-phosphoglycerate + 2 H(+) = D-ribulose 1,5-bisphosphate + CO2 + H2O. The catalysed reaction is D-ribulose 1,5-bisphosphate + O2 = 2-phosphoglycolate + (2R)-3-phosphoglycerate + 2 H(+). In terms of biological role, ruBisCO catalyzes two reactions: the carboxylation of D-ribulose 1,5-bisphosphate, the primary event in carbon dioxide fixation, as well as the oxidative fragmentation of the pentose substrate in the photorespiration process. Both reactions occur simultaneously and in competition at the same active site. In Quercus rubra (Northern red oak), this protein is Ribulose bisphosphate carboxylase large chain.